A 209-amino-acid polypeptide reads, in one-letter code: Ribosomal RNA large subunit methyltransferase E (209 aa).

Glycine 63, tryptophan 65, aspartate 83, aspartate 99, and aspartate 124 together coordinate S-adenosyl-L-methionine. The Proton acceptor role is filled by lysine 164.

This sequence belongs to the class I-like SAM-binding methyltransferase superfamily. RNA methyltransferase RlmE family.

It is found in the cytoplasm. The catalysed reaction is uridine(2552) in 23S rRNA + S-adenosyl-L-methionine = 2'-O-methyluridine(2552) in 23S rRNA + S-adenosyl-L-homocysteine + H(+). Functionally, specifically methylates the uridine in position 2552 of 23S rRNA at the 2'-O position of the ribose in the fully assembled 50S ribosomal subunit. The sequence is that of Ribosomal RNA large subunit methyltransferase E from Shewanella sp. (strain ANA-3).